A 98-amino-acid polypeptide reads, in one-letter code: Nucleoid-associated protein pc0477 (98 aa).

This sequence belongs to the YbaB/EbfC family. Homodimer.

Its subcellular location is the cytoplasm. It localises to the nucleoid. Functionally, binds to DNA and alters its conformation. May be involved in regulation of gene expression, nucleoid organization and DNA protection. The polypeptide is Nucleoid-associated protein pc0477 (Protochlamydia amoebophila (strain UWE25)).